Consider the following 456-residue polypeptide: Bifunctional protein GlmU (456 aa).

Residues 1 to 228 are pyrophosphorylase; the sequence is MPQNTLNIVI…SHLAAGVNNK (228 aa). Residues 11–14, Lys25, Gln75, 80–81, 102–104, Gly138, Glu153, Asn168, and Asn226 contribute to the UDP-N-acetyl-alpha-D-glucosamine site; these read LAAG, GT, and YGD. Asp104 serves as a coordination point for Mg(2+). Asn226 lines the Mg(2+) pocket. The interval 229–249 is linker; the sequence is LQLAELERIFQTGQAQELLKA. The interval 250–456 is N-acetyltransferase; the sequence is GVTLHDPARF…GWVRPEKDKQ (207 aa). The UDP-N-acetyl-alpha-D-glucosamine site is built by Arg332 and Lys350. His362 acts as the Proton acceptor in catalysis. Residues Tyr365 and Asn376 each coordinate UDP-N-acetyl-alpha-D-glucosamine. Residues Ala379, 385 to 386, Ser404, Ala422, and Arg439 contribute to the acetyl-CoA site; that span reads NY.

In the N-terminal section; belongs to the N-acetylglucosamine-1-phosphate uridyltransferase family. The protein in the C-terminal section; belongs to the transferase hexapeptide repeat family. Homotrimer. Requires Mg(2+) as cofactor.

It localises to the cytoplasm. It catalyses the reaction alpha-D-glucosamine 1-phosphate + acetyl-CoA = N-acetyl-alpha-D-glucosamine 1-phosphate + CoA + H(+). The catalysed reaction is N-acetyl-alpha-D-glucosamine 1-phosphate + UTP + H(+) = UDP-N-acetyl-alpha-D-glucosamine + diphosphate. It participates in nucleotide-sugar biosynthesis; UDP-N-acetyl-alpha-D-glucosamine biosynthesis; N-acetyl-alpha-D-glucosamine 1-phosphate from alpha-D-glucosamine 6-phosphate (route II): step 2/2. It functions in the pathway nucleotide-sugar biosynthesis; UDP-N-acetyl-alpha-D-glucosamine biosynthesis; UDP-N-acetyl-alpha-D-glucosamine from N-acetyl-alpha-D-glucosamine 1-phosphate: step 1/1. The protein operates within bacterial outer membrane biogenesis; LPS lipid A biosynthesis. Its function is as follows. Catalyzes the last two sequential reactions in the de novo biosynthetic pathway for UDP-N-acetylglucosamine (UDP-GlcNAc). The C-terminal domain catalyzes the transfer of acetyl group from acetyl coenzyme A to glucosamine-1-phosphate (GlcN-1-P) to produce N-acetylglucosamine-1-phosphate (GlcNAc-1-P), which is converted into UDP-GlcNAc by the transfer of uridine 5-monophosphate (from uridine 5-triphosphate), a reaction catalyzed by the N-terminal domain. The sequence is that of Bifunctional protein GlmU from Neisseria meningitidis serogroup C (strain 053442).